Here is a 416-residue protein sequence, read N- to C-terminus: Probable F-box protein At5g47300 (416 aa).

Positions 40–86 constitute an F-box domain; the sequence is TLMLSDLPGDLLEEILCRVPATSLKQLRSTCKQWNNLFNNGRFTRKH.

The sequence is that of Probable F-box protein At5g47300 from Arabidopsis thaliana (Mouse-ear cress).